The following is a 156-amino-acid chain: MSRRHKAERREVIPDAKFGNIIVSRFMNSIMRDGKKSVAESIVYGALDVVEAKAKSNPLDLFVTALENVAPAVEVRSRRVGGATYQVPVEVRTERRQTLAIRWLIASARARNEKTMVERLSAELLDAANNRGNAVKKREDTHRMAEANRAFSHYRW.

The protein belongs to the universal ribosomal protein uS7 family. In terms of assembly, part of the 30S ribosomal subunit. Contacts proteins S9 and S11.

In terms of biological role, one of the primary rRNA binding proteins, it binds directly to 16S rRNA where it nucleates assembly of the head domain of the 30S subunit. Is located at the subunit interface close to the decoding center, probably blocks exit of the E-site tRNA. This Azorhizobium caulinodans (strain ATCC 43989 / DSM 5975 / JCM 20966 / LMG 6465 / NBRC 14845 / NCIMB 13405 / ORS 571) protein is Small ribosomal subunit protein uS7.